We begin with the raw amino-acid sequence, 208 residues long: Uracil phosphoribosyltransferase (208 aa).

5-phospho-alpha-D-ribose 1-diphosphate-binding positions include Arg-78, Arg-103, and 130 to 138 (DPMLATGGS). Residues Ile-193 and 198–200 (GDA) each bind uracil. Asp-199 provides a ligand contact to 5-phospho-alpha-D-ribose 1-diphosphate.

The protein belongs to the UPRTase family. Requires Mg(2+) as cofactor.

It catalyses the reaction UMP + diphosphate = 5-phospho-alpha-D-ribose 1-diphosphate + uracil. It participates in pyrimidine metabolism; UMP biosynthesis via salvage pathway; UMP from uracil: step 1/1. Its activity is regulated as follows. Allosterically activated by GTP. Functionally, catalyzes the conversion of uracil and 5-phospho-alpha-D-ribose 1-diphosphate (PRPP) to UMP and diphosphate. The chain is Uracil phosphoribosyltransferase from Haemophilus influenzae (strain PittEE).